A 542-amino-acid polypeptide reads, in one-letter code: CTP synthase (542 aa).

The segment at 1-265 is amidoligase domain; sequence MPRYIFITGG…DTEILRCFGI (265 aa). Residue S13 coordinates CTP. Residue S13 participates in UTP binding. 14–19 contributes to the ATP binding site; sequence SLGKGL. Y54 provides a ligand contact to L-glutamine. Position 71 (D71) interacts with ATP. Mg(2+) is bound by residues D71 and E139. CTP-binding positions include 146–148, 186–191, and K222; these read DIE and KTKPTQ. UTP contacts are provided by residues 186-191 and K222; that span reads KTKPTQ. 238–240 contacts ATP; the sequence is RDA. Residues 298-541 enclose the Glutamine amidotransferase type-1 domain; that stretch reads YVGLLDAYKS…IAAALHQSRM (244 aa). G353 serves as a coordination point for L-glutamine. C380 (nucleophile; for glutamine hydrolysis) is an active-site residue. Residues 381 to 384, E404, and R469 each bind L-glutamine; that span reads YGMQ. Catalysis depends on residues H514 and E516.

The protein belongs to the CTP synthase family. As to quaternary structure, homotetramer.

The enzyme catalyses UTP + L-glutamine + ATP + H2O = CTP + L-glutamate + ADP + phosphate + 2 H(+). It catalyses the reaction L-glutamine + H2O = L-glutamate + NH4(+). It carries out the reaction UTP + NH4(+) + ATP = CTP + ADP + phosphate + 2 H(+). The protein operates within pyrimidine metabolism; CTP biosynthesis via de novo pathway; CTP from UDP: step 2/2. Its activity is regulated as follows. Allosterically activated by GTP, when glutamine is the substrate; GTP has no effect on the reaction when ammonia is the substrate. The allosteric effector GTP functions by stabilizing the protein conformation that binds the tetrahedral intermediate(s) formed during glutamine hydrolysis. Inhibited by the product CTP, via allosteric rather than competitive inhibition. Its function is as follows. Catalyzes the ATP-dependent amination of UTP to CTP with either L-glutamine or ammonia as the source of nitrogen. Regulates intracellular CTP levels through interactions with the four ribonucleotide triphosphates. The protein is CTP synthase of Maricaulis maris (strain MCS10) (Caulobacter maris).